The primary structure comprises 251 residues: Triosephosphate isomerase (251 aa).

9–11 (NWK) provides a ligand contact to substrate. The active-site Electrophile is the His-95. Residue Glu-167 is the Proton acceptor of the active site. Substrate is bound by residues Gly-173, Ser-213, and 234 to 235 (GG).

Belongs to the triosephosphate isomerase family. Homodimer.

The protein resides in the cytoplasm. It carries out the reaction D-glyceraldehyde 3-phosphate = dihydroxyacetone phosphate. It participates in carbohydrate biosynthesis; gluconeogenesis. Its pathway is carbohydrate degradation; glycolysis; D-glyceraldehyde 3-phosphate from glycerone phosphate: step 1/1. Its function is as follows. Involved in the gluconeogenesis. Catalyzes stereospecifically the conversion of dihydroxyacetone phosphate (DHAP) to D-glyceraldehyde-3-phosphate (G3P). This is Triosephosphate isomerase from Geotalea uraniireducens (strain Rf4) (Geobacter uraniireducens).